Reading from the N-terminus, the 177-residue chain is Probable DNA-directed RNA polymerase subunit delta (177 aa).

Residues 14–81 (CSMIEVVHSV…GENRWGLRSW (68 aa)) form the HTH HARE-type domain. The interval 91–177 (ILPQPKPKKK…DETEEEEEEL (87 aa)) is disordered. The segment covering 106–177 (DGFDDYIEED…DETEEEEEEL (72 aa)) has biased composition (acidic residues).

The protein belongs to the RpoE family. RNAP is composed of a core of 2 alpha, a beta and a beta' subunits. The core is associated with a delta subunit and one of several sigma factors.

Participates in both the initiation and recycling phases of transcription. In the presence of the delta subunit, RNAP displays an increased specificity of transcription, a decreased affinity for nucleic acids, and an increased efficiency of RNA synthesis because of enhanced recycling. The sequence is that of Probable DNA-directed RNA polymerase subunit delta from Bacillus cereus (strain G9842).